Consider the following 151-residue polypeptide: Transcriptional repressor NrdR (151 aa).

A zinc finger lies at 3–34; sequence CPYCAYGESKVVDSRSTEDGSSIRRRRECLKC. An ATP-cone domain is found at 49 to 139; that stretch reads ILVIKKNMSR…VYRQFKDINT (91 aa).

The protein belongs to the NrdR family. Zn(2+) serves as cofactor.

In terms of biological role, negatively regulates transcription of bacterial ribonucleotide reductase nrd genes and operons by binding to NrdR-boxes. In Clostridium botulinum (strain 657 / Type Ba4), this protein is Transcriptional repressor NrdR.